The chain runs to 369 residues: Protein-glutamate methylesterase/protein-glutamine glutaminase 1 (369 aa).

In terms of domain architecture, Response regulatory spans 3–120 (KVVVVDDSAF…SLDIVKIEKD (118 aa)). Residue D54 is modified to 4-aspartylphosphate. Residues 136-168 (RSFRPAPAVRPAAPAALRATPRPSAAPSSAASS) are compositionally biased toward low complexity. The interval 136-174 (RSFRPAPAVRPAAPAALRATPRPSAAPSSAASSTGTLQV) is disordered. Residues 177 to 369 (GKPVRDVVAI…AQAIMNAVYK (193 aa)) form the CheB-type methylesterase domain. Residues S189, H216, and D312 contribute to the active site.

The protein belongs to the CheB family. Phosphorylated by CheA. Phosphorylation of the N-terminal regulatory domain activates the methylesterase activity.

The protein resides in the cytoplasm. The catalysed reaction is [protein]-L-glutamate 5-O-methyl ester + H2O = L-glutamyl-[protein] + methanol + H(+). It catalyses the reaction L-glutaminyl-[protein] + H2O = L-glutamyl-[protein] + NH4(+). Involved in chemotaxis. Part of a chemotaxis signal transduction system that modulates chemotaxis in response to various stimuli. Catalyzes the demethylation of specific methylglutamate residues introduced into the chemoreceptors (methyl-accepting chemotaxis proteins or MCP) by CheR. Also mediates the irreversible deamidation of specific glutamine residues to glutamic acid. The protein is Protein-glutamate methylesterase/protein-glutamine glutaminase 1 of Oleidesulfovibrio alaskensis (strain ATCC BAA-1058 / DSM 17464 / G20) (Desulfovibrio alaskensis).